Consider the following 513-residue polypeptide: ATP synthase subunit alpha (513 aa).

169-176 (GDRQTGKT) provides a ligand contact to ATP.

The protein belongs to the ATPase alpha/beta chains family. In terms of assembly, F-type ATPases have 2 components, CF(1) - the catalytic core - and CF(0) - the membrane proton channel. CF(1) has five subunits: alpha(3), beta(3), gamma(1), delta(1), epsilon(1). CF(0) has three main subunits: a(1), b(2) and c(9-12). The alpha and beta chains form an alternating ring which encloses part of the gamma chain. CF(1) is attached to CF(0) by a central stalk formed by the gamma and epsilon chains, while a peripheral stalk is formed by the delta and b chains.

It is found in the cell inner membrane. The enzyme catalyses ATP + H2O + 4 H(+)(in) = ADP + phosphate + 5 H(+)(out). Functionally, produces ATP from ADP in the presence of a proton gradient across the membrane. The alpha chain is a regulatory subunit. The protein is ATP synthase subunit alpha of Tolumonas auensis (strain DSM 9187 / NBRC 110442 / TA 4).